A 321-amino-acid polypeptide reads, in one-letter code: Holliday junction branch migration complex subunit RuvB (321 aa).

The tract at residues 1–173 is large ATPase domain (RuvB-L); sequence MMMEQECVDD…FGIISRLEFY (173 aa). Residues I12, R13, G54, K57, T58, T59, 120–122, R163, Y173, and R210 each bind ATP; that span reads EDF. T58 serves as a coordination point for Mg(2+). The interval 174–244 is small ATPAse domain (RuvB-S); it reads TPAELACIVK…LASDALARMD (71 aa). A head domain (RuvB-H) region spans residues 247-321; the sequence is ELGLDQMDRK…KAYRHMNLLA (75 aa). DNA is bound by residues R302 and R307.

It belongs to the RuvB family. Homohexamer. Forms an RuvA(8)-RuvB(12)-Holliday junction (HJ) complex. HJ DNA is sandwiched between 2 RuvA tetramers; dsDNA enters through RuvA and exits via RuvB. An RuvB hexamer assembles on each DNA strand where it exits the tetramer. Each RuvB hexamer is contacted by two RuvA subunits (via domain III) on 2 adjacent RuvB subunits; this complex drives branch migration. In the full resolvosome a probable DNA-RuvA(4)-RuvB(12)-RuvC(2) complex forms which resolves the HJ.

Its subcellular location is the cytoplasm. The catalysed reaction is ATP + H2O = ADP + phosphate + H(+). Functionally, the RuvA-RuvB-RuvC complex processes Holliday junction (HJ) DNA during genetic recombination and DNA repair, while the RuvA-RuvB complex plays an important role in the rescue of blocked DNA replication forks via replication fork reversal (RFR). RuvA specifically binds to HJ cruciform DNA, conferring on it an open structure. The RuvB hexamer acts as an ATP-dependent pump, pulling dsDNA into and through the RuvAB complex. RuvB forms 2 homohexamers on either side of HJ DNA bound by 1 or 2 RuvA tetramers; 4 subunits per hexamer contact DNA at a time. Coordinated motions by a converter formed by DNA-disengaged RuvB subunits stimulates ATP hydrolysis and nucleotide exchange. Immobilization of the converter enables RuvB to convert the ATP-contained energy into a lever motion, pulling 2 nucleotides of DNA out of the RuvA tetramer per ATP hydrolyzed, thus driving DNA branch migration. The RuvB motors rotate together with the DNA substrate, which together with the progressing nucleotide cycle form the mechanistic basis for DNA recombination by continuous HJ branch migration. Branch migration allows RuvC to scan DNA until it finds its consensus sequence, where it cleaves and resolves cruciform DNA. The sequence is that of Holliday junction branch migration complex subunit RuvB from Oleidesulfovibrio alaskensis (strain ATCC BAA-1058 / DSM 17464 / G20) (Desulfovibrio alaskensis).